A 692-amino-acid chain; its full sequence is Zinc finger protein 180 (692 aa).

In terms of domain architecture, KRAB spans 72–145; the sequence is VNFKIVTVDF…GVKIERFTRD (74 aa). Residues Lys138, Lys159, Lys168, Lys191, Lys198, Lys226, Lys304, Lys313, and Lys330 each participate in a glycyl lysine isopeptide (Lys-Gly) (interchain with G-Cter in SUMO2) cross-link. 12 consecutive C2H2-type zinc fingers follow at residues 353-375, 381-403, 409-431, 437-459, 465-487, 493-515, 521-543, 549-571, 577-599, 605-627, 633-655, and 661-683; these read FECN…QRTH, YECS…QRTH, YRCN…QRTH, YECN…QRTH, YECN…QRIH, YECS…QRIH, and FTCI…QATH.

Belongs to the krueppel C2H2-type zinc-finger protein family.

It is found in the nucleus. In terms of biological role, may be involved in transcriptional regulation. The polypeptide is Zinc finger protein 180 (ZNF180) (Homo sapiens (Human)).